The sequence spans 149 residues: MRLHELYPFDEERKQRKRVGRGSGSGWGCTSGKGNKGQNARSGGGVRPGFEGGQMPLQRRLPKRGFKNYLFKARYEVINLGQLVGAFEGKTEITLDDIYARGLARAGAAVKVLGNGECNVAVKVEAHKFSASAVEKIQKAGGEAKALEG.

A disordered region spans residues Lys14–Leu57. Composition is skewed to gly residues over residues Arg21–Asn35 and Ser42–Gly52.

This sequence belongs to the universal ribosomal protein uL15 family. In terms of assembly, part of the 50S ribosomal subunit.

In terms of biological role, binds to the 23S rRNA. The polypeptide is Large ribosomal subunit protein uL15 (Oleidesulfovibrio alaskensis (strain ATCC BAA-1058 / DSM 17464 / G20) (Desulfovibrio alaskensis)).